A 440-amino-acid polypeptide reads, in one-letter code: Thymidine phosphorylase (440 aa).

It belongs to the thymidine/pyrimidine-nucleoside phosphorylase family. Homodimer.

It carries out the reaction thymidine + phosphate = 2-deoxy-alpha-D-ribose 1-phosphate + thymine. It functions in the pathway pyrimidine metabolism; dTMP biosynthesis via salvage pathway; dTMP from thymine: step 1/2. The enzymes which catalyze the reversible phosphorolysis of pyrimidine nucleosides are involved in the degradation of these compounds and in their utilization as carbon and energy sources, or in the rescue of pyrimidine bases for nucleotide synthesis. This is Thymidine phosphorylase from Escherichia coli (strain K12 / DH10B).